The following is a 161-amino-acid chain: Peroxynitrite isomerase 2 (161 aa).

A GXWXGXG motif is present at residues 17 to 23 (GTWAGQG). A heme b-binding site is contributed by H152.

Belongs to the nitrobindin family. In terms of assembly, homodimer. Heme b is required as a cofactor.

The catalysed reaction is peroxynitrite = nitrate. The protein operates within nitrogen metabolism. Its function is as follows. Heme-binding protein able to scavenge peroxynitrite and to protect free L-tyrosine against peroxynitrite-mediated nitration, by acting as a peroxynitrite isomerase that converts peroxynitrite to nitrate. Therefore, this protein likely plays a role in peroxynitrite sensing and in the detoxification of reactive nitrogen and oxygen species (RNS and ROS, respectively). Is able to bind nitric oxide (NO) in vitro, but may act as a sensor of peroxynitrite levels in vivo. The polypeptide is Peroxynitrite isomerase 2 (Mycobacterium marinum (strain ATCC BAA-535 / M)).